The primary structure comprises 73 residues: Large ribosomal subunit protein bL31 (73 aa).

Belongs to the bacterial ribosomal protein bL31 family. Type A subfamily. In terms of assembly, part of the 50S ribosomal subunit.

Its function is as follows. Binds the 23S rRNA. This chain is Large ribosomal subunit protein bL31, found in Rhizobium etli (strain CIAT 652).